The sequence spans 1149 residues: Nitric oxide synthase, inducible (1149 aa).

The disordered stretch occupies residues lysine 22–histidine 83. A DINNN-motif; mediates interaction with SPSB1, SPSB2 and SPSB4 motif is present at residues aspartate 23 to asparagine 27. The segment covering lysine 50–glycine 61 has biased composition (polar residues). Positions 109 and 114 each coordinate Zn(2+). A (6R)-L-erythro-5,6,7,8-tetrahydrobiopterin-binding site is contributed by serine 117. Residue cysteine 199 participates in heme b binding. Residues glutamine 262, tryptophan 371, tyrosine 372, and glutamate 376 each coordinate L-arginine. Residues arginine 380, isoleucine 461, tryptophan 462, and phenylalanine 475 each contribute to the (6R)-L-erythro-5,6,7,8-tetrahydrobiopterin site. Tyrosine 490 provides a ligand contact to heme b. The calmodulin-binding stretch occupies residues phenylalanine 514 to serine 534. Positions alanine 538 to phenylalanine 676 constitute a Flavodoxin-like domain. 5 residues coordinate FMN: threonine 544, glutamate 545, threonine 546, lysine 548, and serine 549. A Phosphotyrosine modification is found at tyrosine 574. Serine 590, threonine 591, serine 627, arginine 632, cysteine 634, glutamate 660, and glutamine 664 together coordinate FMN. The region spanning threonine 729–proline 969 is the FAD-binding FR-type domain. Arginine 749 provides a ligand contact to NADP(+). Histidine 771, arginine 905, tyrosine 907, serine 908, threonine 923, and alanine 925 together coordinate FAD. Residue threonine 928 coordinates NADP(+). FAD contacts are provided by tyrosine 929, valine 942, cysteine 943, and serine 944. Residues threonine 983, arginine 1016, serine 1045, arginine 1046, lysine 1052, tyrosine 1054, glutamine 1056, and aspartate 1089 each coordinate NADP(+).

This sequence belongs to the NOS family. Homodimer. Interacts with NHERF1. Interacts with GAPDH; induced by oxidatively-modified low-densitity lipoprotein (LDL(ox)). Interacts with S100A8 and S100A9 to form the iNOS-S100A8/9 transnitrosylase complex. Interacts with SPSB1, SPSB2 and SPSB4. Interacts with ELOC and CUL5 in the presence of SPSB1 or SPSB2 or SPSB4. Forms a complex with ASL, ASS1 and HSP90AA1; the complex regulates cell-autonomous L-arginine synthesis and citrulline recycling while channeling extracellular L-arginine to nitric oxide synthesis pathway. Heme b serves as cofactor. The cofactor is FAD. FMN is required as a cofactor. It depends on (6R)-L-erythro-5,6,7,8-tetrahydrobiopterin as a cofactor. Post-translationally, polyubiquitinated; mediated by SPSB1, SPSB2 and SPSB4, leading to proteasomal degradation. In terms of tissue distribution, expressed in the lung and colon. Not detected in the heart, aorta, liver, kidney, and spleen.

The protein localises to the cytoplasm. It is found in the cytosol. The enzyme catalyses 2 L-arginine + 3 NADPH + 4 O2 + H(+) = 2 L-citrulline + 2 nitric oxide + 3 NADP(+) + 4 H2O. Its activity is regulated as follows. Regulated by calcium/calmodulin. In terms of biological role, produces nitric oxide (NO) which is a messenger molecule with diverse functions throughout the body. In macrophages, NO mediates tumoricidal and bactericidal actions. Also has nitrosylase activity and mediates cysteine S-nitrosylation of cytoplasmic target proteins such PTGS2/COX2. As component of the iNOS-S100A8/9 transnitrosylase complex involved in the selective inflammatory stimulus-dependent S-nitrosylation of GAPDH implicated in regulation of the GAIT complex activity and probably multiple targets including ANXA5, EZR, MSN and VIM. Involved in inflammation, enhances the synthesis of pro-inflammatory mediators such as IL6 and IL8. The chain is Nitric oxide synthase, inducible (NOS2) from Cavia porcellus (Guinea pig).